The primary structure comprises 487 residues: Catalase (487 aa).

A disordered region spans residues 1–20; the sequence is MSQRVLTTESGAPVADNQNS. Catalysis depends on residues histidine 54 and asparagine 127. Tyrosine 337 contacts heme.

Belongs to the catalase family. Heme serves as cofactor.

It catalyses the reaction 2 H2O2 = O2 + 2 H2O. Its function is as follows. Decomposes hydrogen peroxide into water and oxygen; serves to protect cells from the toxic effects of hydrogen peroxide. The protein is Catalase (katA) of Streptomyces coelicolor (strain ATCC BAA-471 / A3(2) / M145).